Consider the following 116-residue polypeptide: Fluoride-specific ion channel FluC 2 (116 aa).

Helical transmembrane passes span 3-23 and 43-63; these read LLTALAVGAGGAAGAVARYAV and LLFGVAIGADFGGAPAVAVTV. Na(+) contacts are provided by Gly67 and Thr70. A helical transmembrane segment spans residues 96 to 116; that stretch reads VGTLAAALLAVFLGIALGAAL.

It belongs to the fluoride channel Fluc/FEX (TC 1.A.43) family.

It localises to the cell membrane. It catalyses the reaction fluoride(in) = fluoride(out). Its activity is regulated as follows. Na(+) is not transported, but it plays an essential structural role and its presence is essential for fluoride channel function. Its function is as follows. Fluoride-specific ion channel. Important for reducing fluoride concentration in the cell, thus reducing its toxicity. The polypeptide is Fluoride-specific ion channel FluC 2 (Natronomonas pharaonis (strain ATCC 35678 / DSM 2160 / CIP 103997 / JCM 8858 / NBRC 14720 / NCIMB 2260 / Gabara) (Halobacterium pharaonis)).